The primary structure comprises 394 residues: Acetate kinase 1 (394 aa).

Residue Asn-8 coordinates Mg(2+). Lys-15 lines the ATP pocket. Residue Arg-90 participates in substrate binding. Asp-147 serves as the catalytic Proton donor/acceptor. Residues 207–211 (HLGSG) and 282–284 (DMR) each bind ATP. A Mg(2+)-binding site is contributed by Glu-382.

This sequence belongs to the acetokinase family. In terms of assembly, homodimer. Mg(2+) serves as cofactor. The cofactor is Mn(2+).

The protein localises to the cytoplasm. It carries out the reaction acetate + ATP = acetyl phosphate + ADP. It participates in metabolic intermediate biosynthesis; acetyl-CoA biosynthesis; acetyl-CoA from acetate: step 1/2. Its function is as follows. Catalyzes the formation of acetyl phosphate from acetate and ATP. Can also catalyze the reverse reaction. This is Acetate kinase 1 from Latilactobacillus sakei subsp. sakei (strain 23K) (Lactobacillus sakei subsp. sakei).